We begin with the raw amino-acid sequence, 751 residues long: Zinc finger protein 184 (751 aa).

Residues 28 to 99 (VTFKDVIVDF…EPSIPVGTCA (72 aa)) enclose the KRAB domain. A phosphoserine mark is found at S117, S122, and S199. The span at 191-202 (SNLVTQEPSPEE) shows a compositional bias: polar residues. Positions 191–212 (SNLVTQEPSPEETSTKRSIKQN) are disordered. Residue K206 forms a Glycyl lysine isopeptide (Lys-Gly) (interchain with G-Cter in SUMO2) linkage. 19 consecutive C2H2-type zinc fingers follow at residues 222–244 (CKCNECGKAFSYCSALIRHQRTH), 250–272 (YKCNECEKAFSRSENLINHQRIH), 278–300 (YKCDQCGKGFIEGPSLTQHQRIH), 306–328 (YKCDECGKAFSQRTHLVQHQRIH), 334–356 (YTCNECGKAFSQRGHFMEHQKIH), 362–384 (FKCDECDKTFTRSTHLTQHQKIH), 390–412 (YKCNECGKAFNGPSTFIRHHMIH), 418–440 (YECNECGKAFSQHSNLTQHQKTH), 446–468 (YDCAECGKSFSYWSSLAQHLKIH), 474–496 (YKCNECGKAFSYCSSLTQHRRIH), 502–524 (FECSECGKAFSYLSNLNQHQKTH), 530–552 (YECKECGKAFIRSSSLAKHERIH), 558–580 (YQCHECGKTFSYGSSLIQHRKIH), 586–608 (YKCNECGRAFNQNIHLTQHKRIH), 614–636 (YECAECGKAFRHCSSLAQHQKTH), 642–664 (YQCNKCEKTFSQSSHLTQHQRIH), 670–692 (YKCNECDKAFSRSTHLTEHQNTH), 698–720 (YNCNECRKTFSQSTYLIQHQRIH), and 726–748 (FGCNDCGKSFRYRSALNKHQRLH).

The protein belongs to the krueppel C2H2-type zinc-finger protein family. As to expression, predominant expression in testis.

It is found in the nucleus. May be involved in transcriptional regulation. The sequence is that of Zinc finger protein 184 (ZNF184) from Homo sapiens (Human).